The following is a 259-amino-acid chain: Malonyl-[acyl-carrier protein] O-methyltransferase (259 aa).

This sequence belongs to the methyltransferase superfamily.

It catalyses the reaction malonyl-[ACP] + S-adenosyl-L-methionine = malonyl-[ACP] methyl ester + S-adenosyl-L-homocysteine. Its pathway is cofactor biosynthesis; biotin biosynthesis. Functionally, converts the free carboxyl group of a malonyl-thioester to its methyl ester by transfer of a methyl group from S-adenosyl-L-methionine (SAM). It allows to synthesize pimeloyl-ACP via the fatty acid synthetic pathway. This chain is Malonyl-[acyl-carrier protein] O-methyltransferase, found in Anoxybacillus flavithermus (strain DSM 21510 / WK1).